The primary structure comprises 113 residues: Carrot ABA-induced in somatic embryos 3 (113 aa).

3 stretches are compositionally biased toward basic and acidic residues: residues 1–17, 32–52, and 65–77; these read MASGQEKRSELDARAKQ, EAQEHLAEGRSKGGHTRKEQL, and GETRREQMGKEGY. The disordered stretch occupies residues 1–113; sequence MASGQEKRSE…IDQSKFRTKS (113 aa).

Belongs to the small hydrophilic plant seed protein family. In terms of tissue distribution, expressed in embryogenic cells, somatic embryos and seeds at the later stages of development. Not detected in leaves.

This is Carrot ABA-induced in somatic embryos 3 from Daucus carota (Wild carrot).